Reading from the N-terminus, the 61-residue chain is Calprismin (61 aa).

Glycosylated. As to expression, expressed by the calcifying mantle epithelium and incorporated into the shell's calcitic prismatic layer.

In Pinna nobilis (Noble pen shell), this protein is Calprismin.